The sequence spans 441 residues: UDP-N-acetylglucosamine 1-carboxyvinyltransferase 1 (441 aa).

42–43 (KN) provides a ligand contact to phosphoenolpyruvate. Arg-117 is a binding site for UDP-N-acetyl-alpha-D-glucosamine. Cys-141 functions as the Proton donor in the catalytic mechanism. At Cys-141 the chain carries 2-(S-cysteinyl)pyruvic acid O-phosphothioketal. Asp-330 and Ile-352 together coordinate UDP-N-acetyl-alpha-D-glucosamine.

It belongs to the EPSP synthase family. MurA subfamily.

The protein localises to the cytoplasm. It carries out the reaction phosphoenolpyruvate + UDP-N-acetyl-alpha-D-glucosamine = UDP-N-acetyl-3-O-(1-carboxyvinyl)-alpha-D-glucosamine + phosphate. The protein operates within cell wall biogenesis; peptidoglycan biosynthesis. Its function is as follows. Cell wall formation. Adds enolpyruvyl to UDP-N-acetylglucosamine. In Symbiobacterium thermophilum (strain DSM 24528 / JCM 14929 / IAM 14863 / T), this protein is UDP-N-acetylglucosamine 1-carboxyvinyltransferase 1.